The chain runs to 830 residues: BLOC-2 complex member HPS5 homolog (830 aa).

WD repeat units lie at residues 25 to 64, 67 to 106, and 114 to 153; these read RNNS…FLAI, SQLG…STDG, and GGPA…GRNI. Positions 578–604 form a coiled coil; the sequence is DTETIVRLLRKLETLMEENEEPNARLK.

It belongs to the HPS5 family.

Has a role in the biogenesis of eye pigment granules. Eye pigment granules are specialized forms of late endosomes or lysosomes. Biogenesis of pigment granules in the eye requires molecular components required for protein delivery to lysosomes. In Anopheles gambiae (African malaria mosquito), this protein is BLOC-2 complex member HPS5 homolog.